Reading from the N-terminus, the 284-residue chain is MNSFRFTKMHGLGNSYIYVNQFEEQLPEERLAEIAVKVSSIHTGIGSDGMILICPSEKAPVKMRIFNNDGSEGKNCGNGLRCVAKYAYEHKLTEETSFFIETLSGLVKADITEDNGIVREVAVDMGEPRLTKKELPMLGNEDERTIDETFVFGETELSGTAVSMGNPHIVFPVADINQAPLTTLGPVIEKDPRFPEGVNVEFVETVSADELHFRVWERGSGITQACGTGACAAAVASVLNGVSERNRDITVHLAGGDLVINWQDNGHVLMTGPAETVCSGVYYL.

Residues Asn-14 and Asn-67 each coordinate substrate. Residue Cys-76 is the Proton donor of the active site. Substrate is bound by residues 77–78, Asn-166, Asn-199, and 217–218; these read GN and ER. Catalysis depends on Cys-226, which acts as the Proton acceptor. 227 to 228 is a substrate binding site; that stretch reads GT.

Belongs to the diaminopimelate epimerase family. As to quaternary structure, homodimer.

The protein localises to the cytoplasm. It catalyses the reaction (2S,6S)-2,6-diaminopimelate = meso-2,6-diaminopimelate. It participates in amino-acid biosynthesis; L-lysine biosynthesis via DAP pathway; DL-2,6-diaminopimelate from LL-2,6-diaminopimelate: step 1/1. Catalyzes the stereoinversion of LL-2,6-diaminopimelate (L,L-DAP) to meso-diaminopimelate (meso-DAP), a precursor of L-lysine and an essential component of the bacterial peptidoglycan. This Bacillus velezensis (strain DSM 23117 / BGSC 10A6 / LMG 26770 / FZB42) (Bacillus amyloliquefaciens subsp. plantarum) protein is Diaminopimelate epimerase.